A 502-amino-acid chain; its full sequence is Maturase K (502 aa).

This sequence belongs to the intron maturase 2 family. MatK subfamily.

Its subcellular location is the plastid. The protein localises to the chloroplast. In terms of biological role, usually encoded in the trnK tRNA gene intron. Probably assists in splicing its own and other chloroplast group II introns. The sequence is that of Maturase K from Ehretia anacua (Sandpaper tree).